We begin with the raw amino-acid sequence, 170 residues long: Shikimate kinase (170 aa).

Residue 11–16 (LSGKST) coordinates ATP. S15 contributes to the Mg(2+) binding site. The substrate site is built by D33, R57, and G79. Residue R119 participates in ATP binding. A substrate-binding site is contributed by R137.

The protein belongs to the shikimate kinase family. In terms of assembly, monomer. Requires Mg(2+) as cofactor.

The protein localises to the cytoplasm. The catalysed reaction is shikimate + ATP = 3-phosphoshikimate + ADP + H(+). The protein operates within metabolic intermediate biosynthesis; chorismate biosynthesis; chorismate from D-erythrose 4-phosphate and phosphoenolpyruvate: step 5/7. Its function is as follows. Catalyzes the specific phosphorylation of the 3-hydroxyl group of shikimic acid using ATP as a cosubstrate. The chain is Shikimate kinase from Clostridium botulinum (strain Loch Maree / Type A3).